Reading from the N-terminus, the 502-residue chain is Cytochrome P450 71B17 (502 aa).

The chain crosses the membrane as a helical span at residues 1-21 (MAISLLCLFLITFVSLTIVGC). Residue Cys-444 coordinates heme.

This sequence belongs to the cytochrome P450 family. It depends on heme as a cofactor.

The protein localises to the membrane. The polypeptide is Cytochrome P450 71B17 (CYP71B17) (Arabidopsis thaliana (Mouse-ear cress)).